The sequence spans 511 residues: Sodium/proline symporter (511 aa).

Helical transmembrane passes span 16 to 36 (WQTYVMIIVYFIILLIIGFYG), 54 to 74 (IGPYITALSAGASDMSGWMIM), 85 to 105 (LSAIWITIGLTLGAYINYFVV), 139 to 159 (IISGLIIVVFFTLYTHSGFVS), 175 to 195 (GLLIVAIIVIFYTFFGGYLAV), 199 to 219 (DFFQGVIMLIAMVMVPIVALL), 246 to 266 (VLGIVSLFSWGLGYFGQPHII), 284 to 304 (LGISWMAVGLLGAIGVGLTGI), 327 to 347 (ILFHPLVGGFLLAAILAAIMS), 381 to 401 (FVLIGRLSVLLVAIVAITIAW), 407 to 427 (ILNLVGNAWAGFGAAFSPLVL), 438 to 458 (AGAISGMVAGAVVVIVWISWI), and 467 to 487 (FFGMYEIIPGFIISVLITYIV).

It belongs to the sodium:solute symporter (SSF) (TC 2.A.21) family.

The protein resides in the cell membrane. The catalysed reaction is L-proline(in) + Na(+)(in) = L-proline(out) + Na(+)(out). Functionally, catalyzes the sodium-dependent uptake of extracellular L-proline. The protein is Sodium/proline symporter (putP) of Staphylococcus epidermidis (strain ATCC 12228 / FDA PCI 1200).